The following is a 554-amino-acid chain: CTP synthase (554 aa).

Positions 1–270 are amidoligase domain; the sequence is MTKFVFVTGG…DRIICEELRI (270 aa). Position 13 (serine 13) interacts with CTP. UTP is bound at residue serine 13. ATP contacts are provided by residues 14-19 and aspartate 71; that span reads SLGKGI. Residues aspartate 71 and glutamate 144 each contribute to the Mg(2+) site. CTP-binding positions include 151 to 153, 191 to 196, and lysine 227; these read DIE and KTKPTQ. Residues 191-196 and lysine 227 contribute to the UTP site; that span reads KTKPTQ. The 253-residue stretch at 295 to 547 folds into the Glutamine amidotransferase type-1 domain; the sequence is TIGMVGKYVD…VEAALAHRQR (253 aa). An L-glutamine-binding site is contributed by glycine 356. Cysteine 383 serves as the catalytic Nucleophile; for glutamine hydrolysis. L-glutamine-binding positions include 384 to 387, glutamate 407, and arginine 473; that span reads LGMQ. Active-site residues include histidine 520 and glutamate 522.

The protein belongs to the CTP synthase family. In terms of assembly, homotetramer.

The enzyme catalyses UTP + L-glutamine + ATP + H2O = CTP + L-glutamate + ADP + phosphate + 2 H(+). It catalyses the reaction L-glutamine + H2O = L-glutamate + NH4(+). It carries out the reaction UTP + NH4(+) + ATP = CTP + ADP + phosphate + 2 H(+). It participates in pyrimidine metabolism; CTP biosynthesis via de novo pathway; CTP from UDP: step 2/2. With respect to regulation, allosterically activated by GTP, when glutamine is the substrate; GTP has no effect on the reaction when ammonia is the substrate. The allosteric effector GTP functions by stabilizing the protein conformation that binds the tetrahedral intermediate(s) formed during glutamine hydrolysis. Inhibited by the product CTP, via allosteric rather than competitive inhibition. Its function is as follows. Catalyzes the ATP-dependent amination of UTP to CTP with either L-glutamine or ammonia as the source of nitrogen. Regulates intracellular CTP levels through interactions with the four ribonucleotide triphosphates. The protein is CTP synthase of Ralstonia nicotianae (strain ATCC BAA-1114 / GMI1000) (Ralstonia solanacearum).